Reading from the N-terminus, the 292-residue chain is Probable ABC transporter permease protein YurN (292 aa).

6 consecutive transmembrane segments (helical) span residues 7–27, 70–90, 106–126, 160–180, 215–235, and 260–280; these read IIPYLFLVPALVFLLFVYIPI, VLYAVISIVCQVFGGLILAAV, VFFLPVVISMTVIALLFDFIY, VIFVSQWQSVGYIAMLYIVSI, FVAVVMTLTGAFTVFNEPYIL, and MMGYASAIATVVLIITLALSL. An ABC transmembrane type-1 domain is found at 66–282; that stretch reads LTNNVLYAVI…IITLALSLMQ (217 aa).

Belongs to the binding-protein-dependent transport system permease family. MalFG subfamily.

Its subcellular location is the cell membrane. Functionally, probably part of the binding-protein-dependent transport system YurMNO. Probably responsible for the translocation of the substrate across the membrane. In Bacillus subtilis (strain 168), this protein is Probable ABC transporter permease protein YurN (yurN).